Consider the following 61-residue polypeptide: Hepcidin (61 aa).

The disordered stretch occupies residues 1–24 (LQVLTEEVGSIDSPVGEHQQPGGE). Positions 1 to 34 (LQVLTEEVGSIDSPVGEHQQPGGESMRLPEHFRF) are excised as a propeptide. 4 disulfide bridges follow: Cys43/Cys59, Cys46/Cys49, Cys47/Xaa55, and Cys50/Cys58.

It belongs to the hepcidin family.

Its subcellular location is the secreted. Seems to act as a signaling molecule involved in the maintenance of iron homeostasis. Seems to be required in conjunction with HFE to regulate both intestinal iron absorption and iron storage in macrophages. May also have antimicrobial activity. The chain is Hepcidin (hamp) from Oncorhynchus mykiss (Rainbow trout).